We begin with the raw amino-acid sequence, 155 residues long: Ribosome maturation factor RimP (155 aa).

It belongs to the RimP family.

Its subcellular location is the cytoplasm. Required for maturation of 30S ribosomal subunits. This Listeria welshimeri serovar 6b (strain ATCC 35897 / DSM 20650 / CCUG 15529 / CIP 8149 / NCTC 11857 / SLCC 5334 / V8) protein is Ribosome maturation factor RimP.